Consider the following 135-residue polypeptide: Poly [ADP-ribose] polymerase 1 (135 aa).

Residues 1-21 form the PARP alpha-helical domain; it reads QAKVEMLDNLLDIEVAYSLLK. A PARP catalytic domain is found at 30–135; sequence DPIDINYEKL…APVTGYMFGK (106 aa). Residues 104–106, Gly-113, and Arg-120 each bind NAD(+); that span reads HGS. Lys-135 is a catalytic residue.

This sequence belongs to the ARTD/PARP family. In terms of assembly, homodimer; PARP-type zinc-fingers from separate parp1 molecules form a dimer module that specifically recognizes DNA strand breaks. Post-translationally, poly-ADP-ribosylated on serine, glutamate and aspartate residues by autocatalysis. Auto-ADP-ribosylation on serine takes place following interaction with HPF1. Auto poly-ADP-ribosylation on serine residues promotes its dissociation from chromatin.

It localises to the chromosome. The protein resides in the nucleus. Its subcellular location is the nucleolus. The protein localises to the cytoplasm. It is found in the cytosol. It catalyses the reaction NAD(+) + (ADP-D-ribosyl)n-acceptor = nicotinamide + (ADP-D-ribosyl)n+1-acceptor + H(+).. The enzyme catalyses L-seryl-[protein] + NAD(+) = O-(ADP-D-ribosyl)-L-seryl-[protein] + nicotinamide + H(+). The catalysed reaction is L-aspartyl-[protein] + NAD(+) = 4-O-(ADP-D-ribosyl)-L-aspartyl-[protein] + nicotinamide. It carries out the reaction L-glutamyl-[protein] + NAD(+) = 5-O-(ADP-D-ribosyl)-L-glutamyl-[protein] + nicotinamide. It catalyses the reaction L-tyrosyl-[protein] + NAD(+) = O-(ADP-D-ribosyl)-L-tyrosyl-[protein] + nicotinamide + H(+). The enzyme catalyses L-histidyl-[protein] + NAD(+) = N(tele)-(ADP-D-ribosyl)-L-histidyl-[protein] + nicotinamide + H(+). Its activity is regulated as follows. ADP-ribosyltransferase activity is regulated via an allosteric activation mechanism. In absence of activation signal, parp1 is autoinhibited by the PARP alpha-helical domain (also named HD region), which prevents effective NAD(+)-binding. Activity is highly stimulated by signals, such as DNA strand breaks. Binding to damaged DNA unfolds the PARP alpha-helical domain, relieving autoinhibition. Poly-ADP-ribosyltransferase activity is tightly regulated and parp1 is removed from damaged chromatin following initial poly-ADP-ribosylation of chromatin to avoid prolonged residence (trapping) that has cytotoxic consequences. A number of factors or post-translational modifications (auto-poly-ADP-ribosylation) promote parp1 removal from chromatin. In terms of biological role, poly-ADP-ribosyltransferase that mediates poly-ADP-ribosylation of proteins and plays a key role in DNA repair. Mediates glutamate, aspartate, serine, histidine or tyrosine ADP-ribosylation of proteins: the ADP-D-ribosyl group of NAD(+) is transferred to the acceptor carboxyl group of target residues and further ADP-ribosyl groups are transferred to the 2'-position of the terminal adenosine moiety, building up a polymer with an average chain length of 20-30 units. Serine ADP-ribosylation of proteins constitutes the primary form of ADP-ribosylation of proteins in response to DNA damage. Specificity for the different amino acids is conferred by interacting factors, such as hpf1 and nmnat1. Following interaction with hpf1, catalyzes serine ADP-ribosylation of target proteins; hpf1 confers serine specificity by completing the parp1 active site. Also catalyzes tyrosine ADP-ribosylation of target proteins following interaction with hpf1. Following interaction with nmnat1, catalyzes glutamate and aspartate ADP-ribosylation of target proteins; nmnat1 confers glutamate and aspartate specificity. Parp1 initiates the repair of DNA breaks: recognizes and binds DNA breaks within chromatin and recruits hpf1, licensing serine ADP-ribosylation of target proteins, such as histones (H2BS6ADPr and H3S10ADPr), thereby promoting decompaction of chromatin and the recruitment of repair factors leading to the reparation of DNA strand breaks. In addition to base excision repair (BER) pathway, also involved in double-strand breaks (DSBs) repair. Mediates the poly-ADP-ribosylation of a number of proteins. In addition to proteins, also able to ADP-ribosylate DNA: catalyzes ADP-ribosylation of DNA strand break termini containing terminal phosphates and a 2'-OH group in single- and double-stranded DNA, respectively. Parp1-mediated DNA repair in neurons plays a role in sleep: senses DNA damage in neurons and promotes sleep, facilitating efficient DNA repair. In addition to DNA repair, also involved in other processes, such as transcription regulation, programmed cell death, membrane repair, adipogenesis and innate immunity. Acts as a repressor of transcription: binds to nucleosomes and modulates chromatin structure in a manner similar to histone H1, thereby altering RNA polymerase II. Acts both as a positive and negative regulator of transcription elongation, depending on the context. Poly-ADP-ribose chains generated by parp1 also play a role in poly-ADP-ribose-dependent cell death, a process named parthanatos. Also acts as a negative regulator of the cGAS-STING pathway by mediating poly-ADP-ribosylation and inactivation of cgas. Acts as a negative regulator of adipogenesis by catalyzing poly ADP-ribosylation of histone H2B on 'Glu-35' (H2BE35ADPr). The polypeptide is Poly [ADP-ribose] polymerase 1 (parp1) (Oncorhynchus masou (Cherry salmon)).